A 195-amino-acid polypeptide reads, in one-letter code: uncharacterized protein (195 aa).

Residues 1–35 (MASSSSAALRPFGTARLTPGRQTGRQTQQQISAPE) are disordered. Low complexity predominate over residues 20-30 (GRQTGRQTQQQ). Residues 76–184 (GVTVIPRVAR…PASINMALEA (109 aa)) enclose the MSP domain.

This is an uncharacterized protein from Caenorhabditis elegans.